The chain runs to 364 residues: GDP-fucose transporter 1 (364 aa).

8 consecutive transmembrane segments (helical) span residues 34–56, 76–98, 111–130, 140–162, 167–185, 195–214, 227–249, and 264–286; these read FVLR…ISMV, VTFY…ATCC, LKVA…MITF, VAFY…YLLL, SFYA…WLGV, SWTG…LNAI, IWRL…LLAL, and AHFW…VTGL. Residues 345-364 form a disordered region; sequence MKKTQEEPHPRENEKSNMEV.

Belongs to the TPT transporter family. SLC35C subfamily.

The protein resides in the golgi apparatus membrane. The catalysed reaction is GMP(out) + GDP-beta-L-fucose(in) = GMP(in) + GDP-beta-L-fucose(out). Antiporter specific for GDP-l-fucose and depending on the concomitant reverse transport of GMP. Involved in GDP-fucose import from the cytoplasm into the Golgi lumen. This is GDP-fucose transporter 1 (SLC35C1) from Bos taurus (Bovine).